The sequence spans 102 residues: Class I hydrophobin 1 (102 aa).

The signal sequence occupies residues 1–18 (MSLFKILVAAATVATALA). Disulfide bonds link Cys-37/Cys-84, Cys-45/Cys-78, Cys-46/Cys-63, and Cys-85/Cys-97.

It belongs to the fungal hydrophobin family.

It is found in the secreted. Its subcellular location is the cell wall. Aerial growth, conidiation, and dispersal of filamentous fungi in the environment rely upon a capability of their secreting small amphipathic proteins called hydrophobins (HPBs) with low sequence identity. Class I can self-assemble into an outermost layer of rodlet bundles on aerial cell surfaces, conferring cellular hydrophobicity that supports fungal growth, development and dispersal; whereas Class II form highly ordered films at water-air interfaces through intermolecular interactions but contribute nothing to the rodlet structure. Hyd1 is essential for stress tolerance, conidial hydrophobicity, adhesion to insect cuticle, and insect infectivity/pathogenicity. Plays a neglectable role in hyphal growth and asexual development. The sequence is that of Class I hydrophobin 1 from Metarhizium robertsii (strain ARSEF 23 / ATCC MYA-3075) (Metarhizium anisopliae (strain ARSEF 23)).